The sequence spans 357 residues: Methylthioribose-1-phosphate isomerase (357 aa).

Substrate contacts are provided by residues 49-51 (RGA), Arg-89, and Gln-197. Asp-238 acts as the Proton donor in catalysis. 248–249 (NK) contacts substrate.

Belongs to the eIF-2B alpha/beta/delta subunits family. MtnA subfamily.

The enzyme catalyses 5-(methylsulfanyl)-alpha-D-ribose 1-phosphate = 5-(methylsulfanyl)-D-ribulose 1-phosphate. Its pathway is amino-acid biosynthesis; L-methionine biosynthesis via salvage pathway; L-methionine from S-methyl-5-thio-alpha-D-ribose 1-phosphate: step 1/6. Its function is as follows. Catalyzes the interconversion of methylthioribose-1-phosphate (MTR-1-P) into methylthioribulose-1-phosphate (MTRu-1-P). The protein is Methylthioribose-1-phosphate isomerase of Leptospira biflexa serovar Patoc (strain Patoc 1 / Ames).